Here is a 649-residue protein sequence, read N- to C-terminus: MVQITLPDGSQRQYPGPVTVAEVAQSIGAGLAKAALAGRVAFDGAEPRLVDTSFRIDNDAQLAIVTAKDADGLDLIRHSTAHLLAYAVKSLFPDAQVTIGPVIDNGFYYDFSYKRPFTPEDLQAIEKKMAELARKDEVVTREEWSRDEAVAYFKGIGEVYKAEIIASIPSNETLSLYREGDFIDLCRGPHVPSTGKLKVFKLMKVAGAYWRGDSKNEMLQRIYGTAWASKDDQDAYLHMLEEAERRDHRKIGRELDLFHFQDEAPGLIFWHPKGWALWQQVEQYMRKVYQDNGYQEVKAPQILDLTLWKKTGHWDNYRENMFTTESENRVYGLKPMNCPGHVQIFNAGLHSYRELPLRYGEFGQCHRNEPSGSLHGMMRVRGFTQDDGHIFCTEDQLQDECAAFTALLQKVYKDFGFTEVLYKVATRPEKRIGSDEIWDKAETALMESLRRTGCEFEISPGEGAFYGPKVEYTLKDAIGRHWQCGTIQVDFSMPVRLGAEYVDQNDQRRPPVMLHRAILGSLERFIGMLIENHAGAMPPWLAPLQAVVCCISEHSAEYAAQITQSLKKQGFRVQADLRGEKITRKIREHSLQKIPYLLVVGDKEMQNGTVAVRGLGGLDLGVIALDDFIARLAEDISTRRNVTQLASAA.

A TGS domain is found at 1-66 (MVQITLPDGS…DNDAQLAIVT (66 aa)). A catalytic region spans residues 247–538 (DHRKIGRELD…LIENHAGAMP (292 aa)). Zn(2+) contacts are provided by C338, H389, and H515.

The protein belongs to the class-II aminoacyl-tRNA synthetase family. In terms of assembly, homodimer. It depends on Zn(2+) as a cofactor.

It localises to the cytoplasm. The enzyme catalyses tRNA(Thr) + L-threonine + ATP = L-threonyl-tRNA(Thr) + AMP + diphosphate + H(+). Catalyzes the attachment of threonine to tRNA(Thr) in a two-step reaction: L-threonine is first activated by ATP to form Thr-AMP and then transferred to the acceptor end of tRNA(Thr). Also edits incorrectly charged L-seryl-tRNA(Thr). The protein is Threonine--tRNA ligase of Bordetella bronchiseptica (strain ATCC BAA-588 / NCTC 13252 / RB50) (Alcaligenes bronchisepticus).